A 430-amino-acid polypeptide reads, in one-letter code: 3-phosphoshikimate 1-carboxyvinyltransferase (430 aa).

3 residues coordinate 3-phosphoshikimate: lysine 21, serine 22, and arginine 26. Phosphoenolpyruvate is bound at residue lysine 21. Phosphoenolpyruvate-binding residues include glycine 94 and arginine 122. Residues serine 167, glutamine 169, aspartate 317, and lysine 344 each contribute to the 3-phosphoshikimate site. Residue glutamine 169 participates in phosphoenolpyruvate binding. The active-site Proton acceptor is the aspartate 317. Phosphoenolpyruvate contacts are provided by arginine 348 and arginine 390.

The protein belongs to the EPSP synthase family. As to quaternary structure, monomer.

It is found in the cytoplasm. It carries out the reaction 3-phosphoshikimate + phosphoenolpyruvate = 5-O-(1-carboxyvinyl)-3-phosphoshikimate + phosphate. It participates in metabolic intermediate biosynthesis; chorismate biosynthesis; chorismate from D-erythrose 4-phosphate and phosphoenolpyruvate: step 6/7. Its function is as follows. Catalyzes the transfer of the enolpyruvyl moiety of phosphoenolpyruvate (PEP) to the 5-hydroxyl of shikimate-3-phosphate (S3P) to produce enolpyruvyl shikimate-3-phosphate and inorganic phosphate. The protein is 3-phosphoshikimate 1-carboxyvinyltransferase of Thermodesulfovibrio yellowstonii (strain ATCC 51303 / DSM 11347 / YP87).